Reading from the N-terminus, the 520-residue chain is Ribonuclease Y (520 aa).

Residues 1 to 21 (MEILIIVIAAVVGLALGFAIA) traverse the membrane as a helical segment. The 86-residue stretch at 210 to 295 (CVSVFNLESD…EVVKKTRKQI (86 aa)) folds into the KH domain. Residues 336–429 (LLQHSREVAK…VQVCDAISGA (94 aa)) form the HD domain.

It belongs to the RNase Y family.

It is found in the cell membrane. Its function is as follows. Endoribonuclease that initiates mRNA decay. The polypeptide is Ribonuclease Y (Christiangramia forsetii (strain DSM 17595 / CGMCC 1.15422 / KT0803) (Gramella forsetii)).